Reading from the N-terminus, the 284-residue chain is Tropomyosin alpha-1 chain (284 aa).

Methionine 1 carries the post-translational modification N-acetylmethionine. Residues methionine 1 to glutamine 38 form a disordered region. The stretch at methionine 1–isoleucine 284 forms a coiled coil. Residues lysine 12 to glutamine 38 are compositionally biased toward basic and acidic residues. Serine 45 is subject to Phosphoserine. The segment at alanine 116–lysine 136 is disordered. 4 positions are modified to phosphoserine: serine 174, serine 186, serine 206, and serine 252. Tyrosine 261 carries the post-translational modification Phosphotyrosine. Serine 271 and serine 283 each carry phosphoserine.

The protein belongs to the tropomyosin family. In terms of assembly, homodimer. Heterodimer of an alpha (TPM1, TPM3 or TPM4) and a beta (TPM2) chain. Interacts with HRG (via the HRR domain); the interaction contributes to the antiangiogenic properties of the histidine/proline-rich region (HRR) of HRG. Interacts (via N-terminus) with LMOD2 (via N-terminus) and TMOD1 (via N-terminus). Post-translationally, phosphorylated at Ser-283 by DAPK1 in response to oxidative stress and this phosphorylation enhances stress fiber formation in endothelial cells.

The protein localises to the cytoplasm. Its subcellular location is the cytoskeleton. Its function is as follows. Binds to actin filaments in muscle and non-muscle cells. Plays a central role, in association with the troponin complex, in the calcium dependent regulation of vertebrate striated muscle contraction. Smooth muscle contraction is regulated by interaction with caldesmon. In non-muscle cells is implicated in stabilizing cytoskeleton actin filaments. In Mus musculus (Mouse), this protein is Tropomyosin alpha-1 chain (Tpm1).